The primary structure comprises 314 residues: Galectin-12 (314 aa).

Galectin domains are found at residues 27–161 and 190–314; these read YGTT…VGFL and CSRA…CVHC.

It is found in the nucleus. Binds lactose. May participate in the apoptosis of adipocytes. The protein is Galectin-12 (Lgals12) of Mus musculus (Mouse).